We begin with the raw amino-acid sequence, 201 residues long: Recombination protein RecR (201 aa).

The C4-type zinc-finger motif lies at 57-72; that stretch reads CRYCRNLSDAEVCLLC. Positions 80-175 constitute a Toprim domain; it reads QQICVVETPA…QATRLAYGVP (96 aa).

This sequence belongs to the RecR family.

Functionally, may play a role in DNA repair. It seems to be involved in an RecBC-independent recombinational process of DNA repair. It may act with RecF and RecO. The protein is Recombination protein RecR of Dichelobacter nodosus (strain VCS1703A).